A 131-amino-acid chain; its full sequence is Large ribosomal subunit protein uL18 (131 aa).

It belongs to the universal ribosomal protein uL18 family. As to quaternary structure, part of the 50S ribosomal subunit; part of the 5S rRNA/L5/L18/L25 subcomplex. Contacts the 5S and 23S rRNAs.

This is one of the proteins that bind and probably mediate the attachment of the 5S RNA into the large ribosomal subunit, where it forms part of the central protuberance. This chain is Large ribosomal subunit protein uL18, found in Corynebacterium kroppenstedtii (strain DSM 44385 / JCM 11950 / CIP 105744 / CCUG 35717).